We begin with the raw amino-acid sequence, 614 residues long: Probable ATP-dependent RNA helicase DDX5 (614 aa).

A compositionally biased stretch (basic and acidic residues) spans 1–15; sequence MSSYSSDRDRGRDRG. The tract at residues 1–39 is disordered; it reads MSSYSSDRDRGRDRGFGAPRFGGSRTGPLSGKKFGNPGE. Ser24 bears the Phosphoserine mark. Residue Lys32 is modified to N6-acetyllysine; alternate. Lys32 participates in a covalent cross-link: Glycyl lysine isopeptide (Lys-Gly) (interchain with G-Cter in SUMO2); alternate. An N6-acetyllysine mark is found at Lys33 and Lys40. Residue Lys45 forms a Glycyl lysine isopeptide (Lys-Gly) (interchain with G-Cter in SUMO2) linkage. Residue Lys53 forms a Glycyl lysine isopeptide (Lys-Gly) (interchain with G-Cter in SUMO2); alternate linkage. A Glycyl lysine isopeptide (Lys-Gly) (interchain with G-Cter in SUMO); alternate cross-link involves residue Lys53. Lys53 participates in a covalent cross-link: Glycyl lysine isopeptide (Lys-Gly) (interchain with G-Cter in SUMO1); alternate. A Q motif motif is present at residues 94-122; that stretch reads LNFYEANFPANVMDVIARQNFTEPTAIQA. ATP-binding positions include 114-116, Gln121, and 138-145; these read FTE and AQTGSGKT. The region spanning 125–300 is the Helicase ATP-binding domain; sequence WPVALSGLDM…EDFLKDYIHI (176 aa). An N6-acetyllysine modification is found at Lys236. The DEAD box signature appears at 248 to 251; it reads DEAD. Position 297 is a phosphotyrosine (Tyr297). The 148-residue stretch at 328 to 475 folds into the Helicase C-terminal domain; it reads KLIRLMEEIM…AINPKLLQLV (148 aa). Glycyl lysine isopeptide (Lys-Gly) (interchain with G-Cter in SUMO2) cross-links involve residues Lys340, Lys343, Lys388, Lys391, Lys411, Lys437, Lys451, and Lys470. The interval 477-504 is disordered; the sequence is DRGSGRSRGRGGMKDDRRDRYSAGKRGG. Positions 477-614 are transactivation domain; it reads DRGSGRSRGR…GYPMPTGYSQ (138 aa). Ser480 carries the phosphoserine modification. Basic and acidic residues predominate over residues 488-498; sequence GMKDDRRDRYS. A Glycyl lysine isopeptide (Lys-Gly) (interchain with G-Cter in SUMO2) cross-link involves residue Lys523.

The protein belongs to the DEAD box helicase family. DDX5/DBP2 subfamily. In terms of assembly, identified in the spliceosome C complex. Component of a ribonucleoprotein complex containing mRNAs and RNA-binding proteins including DDX5, HNRNPH2 and SRSF1 as well as splicing regulator ARVCF. Interacts with RBM4; the interaction occurs in an RNA-independent manner. Interacts with AGO1 and AGO2. Interacts with ESR1, AR, EP300, CREBBP, POLR2A, TP53, RUNX2 and HDAC1. Self-associates. Interacts with DDX17. Interacts with BRDT. The large PER complex involved in the repression of transcriptional termination is composed of at least PER2, CDK9, DDX5, DHX9, NCBP1 and POLR2A (active). Interacts with DHX36; this interaction occurs in a RNA-dependent manner. Interacts with NUPR1. Interacts with ERCC6. Interacts with DDX3X in the cytoplasm; this interaction may be more efficient when both proteins are unphosphorylated. In terms of processing, sumoylated; sumoylation, promoted by PIAS1, promotes interaction with HDAC1 and transcriptional repression activity. Sumoylation also significantly increases stability, and reduces polyubiquitination. Post-translationally, polyubiquitinated, leading to proteasomal degradation. Weakly phosphorylated in the G1/S phase of the cell cycle and much more at G2/M, especially at Thr and Tyr residues.

Its subcellular location is the nucleus. The protein localises to the nucleolus. The protein resides in the cytoplasm. It carries out the reaction ATP + H2O = ADP + phosphate + H(+). Functionally, involved in the alternative regulation of pre-mRNA splicing; its RNA helicase activity is necessary for increasing tau exon 10 inclusion and occurs in a RBM4-dependent manner. Binds to the tau pre-mRNA in the stem-loop region downstream of exon 10. The rate of ATP hydrolysis is highly stimulated by single-stranded RNA. Involved in transcriptional regulation; the function is independent of the RNA helicase activity. Transcriptional coactivator for androgen receptor AR but probably not ESR1. Synergizes with DDX17 and SRA1 RNA to activate MYOD1 transcriptional activity and involved in skeletal muscle differentiation. Transcriptional coactivator for p53/TP53 and involved in p53/TP53 transcriptional response to DNA damage and p53/TP53-dependent apoptosis. Transcriptional coactivator for RUNX2 and involved in regulation of osteoblast differentiation. Acts as a transcriptional repressor in a promoter-specific manner; the function probably involves association with histone deacetylases, such as HDAC1. As component of a large PER complex is involved in the inhibition of 3' transcriptional termination of circadian target genes such as PER1 and NR1D1 and the control of the circadian rhythms. The sequence is that of Probable ATP-dependent RNA helicase DDX5 (Ddx5) from Mus musculus (Mouse).